We begin with the raw amino-acid sequence, 63 residues long: Large ribosomal subunit protein bL28 (63 aa).

The disordered stretch occupies residues 1 to 20 (MSKRCAITGKGPMVGNNVSH).

Belongs to the bacterial ribosomal protein bL28 family.

This is Large ribosomal subunit protein bL28 from Campylobacter concisus (strain 13826).